Reading from the N-terminus, the 224-residue chain is Phosphoribosylformylglycinamidine synthase subunit PurQ (224 aa).

The 222-residue stretch at 3–224 folds into the Glutamine amidotransferase type-1 domain; it reads FGVVVFPGSN…GLLEKVVALA (222 aa). The active-site Nucleophile is C86. Catalysis depends on residues H195 and E197.

In terms of assembly, part of the FGAM synthase complex composed of 1 PurL, 1 PurQ and 2 PurS subunits.

The protein resides in the cytoplasm. The catalysed reaction is N(2)-formyl-N(1)-(5-phospho-beta-D-ribosyl)glycinamide + L-glutamine + ATP + H2O = 2-formamido-N(1)-(5-O-phospho-beta-D-ribosyl)acetamidine + L-glutamate + ADP + phosphate + H(+). The enzyme catalyses L-glutamine + H2O = L-glutamate + NH4(+). Its pathway is purine metabolism; IMP biosynthesis via de novo pathway; 5-amino-1-(5-phospho-D-ribosyl)imidazole from N(2)-formyl-N(1)-(5-phospho-D-ribosyl)glycinamide: step 1/2. Its function is as follows. Part of the phosphoribosylformylglycinamidine synthase complex involved in the purines biosynthetic pathway. Catalyzes the ATP-dependent conversion of formylglycinamide ribonucleotide (FGAR) and glutamine to yield formylglycinamidine ribonucleotide (FGAM) and glutamate. The FGAM synthase complex is composed of three subunits. PurQ produces an ammonia molecule by converting glutamine to glutamate. PurL transfers the ammonia molecule to FGAR to form FGAM in an ATP-dependent manner. PurS interacts with PurQ and PurL and is thought to assist in the transfer of the ammonia molecule from PurQ to PurL. This Trichormus variabilis (strain ATCC 29413 / PCC 7937) (Anabaena variabilis) protein is Phosphoribosylformylglycinamidine synthase subunit PurQ.